The following is a 113-amino-acid chain: Ig kappa chain V-II region 7S34.1 (113 aa).

The tract at residues 1–23 (DIVMTQTAPSALVTPGESVSISC) is framework-1. Cys23 and Cys93 are joined by a disulfide. The interval 24-39 (RSSKSLLHSNGNTYLY) is complementarity-determining-1. The interval 40–54 (WFLQRPGQCPQLLIY) is framework-2. Residues 55-61 (RMSNLAS) form a complementarity-determining-2 region. Residues 62-93 (GVPDRFSGSGSGTAFTLRISRVEAEDVGVYYC) are framework-3. The interval 94 to 102 (MQQREYPYT) is complementarity-determining-3. The tract at residues 103-112 (FGGGTKLEIK) is framework-4.

The polypeptide is Ig kappa chain V-II region 7S34.1 (Mus musculus (Mouse)).